Reading from the N-terminus, the 794-residue chain is FT-interacting protein 1 (794 aa).

The span at 1-27 (MAAKDGAKSQEDYKLKDMKPELGERWP) shows a compositional bias: basic and acidic residues. The interval 1 to 34 (MAAKDGAKSQEDYKLKDMKPELGERWPHGGQRGG) is disordered. C2 domains lie at 37-158 (WIGS…PQWY), 198-321 (VQGE…SKWY), and 364-492 (YISD…THSY). Positions 76, 123, 125, and 131 each coordinate Ca(2+). Helical transmembrane passes span 510 to 532 (LAVR…PLLP), 595 to 615 (IVSV…VCYW), 619 to 639 (LTTI…ELIL), and 737 to 757 (LFVI…FKII).

It belongs to the MCTP family. In terms of assembly, interacts with FT in phloem companion cells. Ca(2+) serves as cofactor. In terms of tissue distribution, expressed in the vascular tissues of roots, cotyledons and rosette leaves. Specifically located in the phloem including companion cells. Observed in flowers. Not detected in the shoot apical meristem.

Its subcellular location is the endoplasmic reticulum membrane. The protein localises to the cell junction. It localises to the plasmodesma. Involved in the export of FT from the phloem companion cells to the sieve elements through the plasmodesmata. Regulates flowering time under long days. May function as a signaling molecule by regulating the trafficking of other regulators. The polypeptide is FT-interacting protein 1 (Arabidopsis thaliana (Mouse-ear cress)).